Reading from the N-terminus, the 441-residue chain is tRNA pseudouridine synthase Pus10 (441 aa).

Asp-268 (nucleophile) is an active-site residue. Substrate contacts are provided by Tyr-333 and Tyr-405.

The protein belongs to the pseudouridine synthase Pus10 family.

The catalysed reaction is uridine(54) in tRNA = pseudouridine(54) in tRNA. It carries out the reaction uridine(55) in tRNA = pseudouridine(55) in tRNA. Its function is as follows. Responsible for synthesis of pseudouridine from uracil-54 and uracil-55 in the psi GC loop of transfer RNAs. This Thermosphaera aggregans (strain DSM 11486 / M11TL) protein is tRNA pseudouridine synthase Pus10.